The following is a 425-amino-acid chain: Septin-7 (425 aa).

The region spanning 28-297 (RGFEFTLMVV…ENYRSRKLAA (270 aa)) is the Septin-type G domain. Residues 38-45 (GESGLGKS) are G1 motif. Residues 38–45 (GESGLGKS), T71, G97, 176–184 (KADTLTPEE), G231, and R246 contribute to the GTP site. The interval 94 to 97 (DTPG) is G3 motif. Residues 175–178 (AKAD) form a G4 motif region. The stretch at 324–421 (LAQMEEERRE…SRTLEKNKKK (98 aa)) forms a coiled coil.

It belongs to the TRAFAC class TrmE-Era-EngA-EngB-Septin-like GTPase superfamily. Septin GTPase family. As to quaternary structure, monomer, and homodimer. Nucleotide binding promotes oligomerization. Can form heterooligomers with other family members and form filaments.

It is found in the cytoplasm. The protein localises to the chromosome. The protein resides in the centromere. It localises to the kinetochore. Its subcellular location is the cytoskeleton. It is found in the spindle. The protein localises to the cleavage furrow. The protein resides in the midbody. It localises to the cilium axoneme. Functionally, filament-forming cytoskeletal GTPase. Required for normal organization of the actin cytoskeleton. Required for normal progress through mitosis. Involved in cytokinesis. Plays a role in ciliogenesis and collective cell movements including convergent extension during gastrulation. Controls cell elongation but not polarization during convergent extension. The sequence is that of Septin-7 from Xenopus laevis (African clawed frog).